Consider the following 1033-residue polypeptide: SIT4-associating protein SAP190 (1033 aa).

Disordered regions lie at residues 32–82 (DQDD…TTES), 147–213 (PEII…QVET), 768–813 (FGND…HDSG), and 828–1033 (ENEE…KEAF). Positions 158–170 (ILIERDRKDKKED) are enriched in basic and acidic residues. Over residues 171–182 (AEEGGDSEETTN) the composition is skewed to acidic residues. The span at 183–195 (DSDHDSGDERSVD) shows a compositional bias: basic and acidic residues. A Phosphoserine modification is found at S774. Acidic residues-rich tracts occupy residues 784 to 793 (SEDIIGDTEG) and 828 to 838 (ENEEDYAEYSD). Phosphoserine is present on residues S857, S862, and S892. Basic and acidic residues predominate over residues 858–879 (DDGKSKSAESEFTDKISEHRDG). Residues 909–924 (SRSQPSDPKLQDQNIF) are compositionally biased toward polar residues. The segment covering 932–944 (GVGDDDDYMDPND) has biased composition (acidic residues). A Phosphothreonine modification is found at T990. S991 carries the post-translational modification Phosphoserine. Acidic residues predominate over residues 1000-1018 (ISSDEEDSEDEDEENDMGN).

Belongs to the SAPS family. As to quaternary structure, associates with the SIT4 protein phosphatase catalytic subunit in a cell-cycle-dependent manner. In terms of processing, hyperphosphorylated in the absence of SIT4.

Its subcellular location is the cytoplasm. Positive regulator of protein phosphatase SIT4. Involved in the general amino acid control (GAAC) response regulated by TOR. Involved in the dephosphorylation of the elongator complex subunit IKI3. This is SIT4-associating protein SAP190 (SAP190) from Saccharomyces cerevisiae (strain Lalvin EC1118 / Prise de mousse) (Baker's yeast).